We begin with the raw amino-acid sequence, 775 residues long: Kazrin (775 aa).

The segment at 38–66 (AELSGGGGPGPGPGAAASASAAGDSAATN) is disordered. Positions 51–64 (GAAASASAAGDSAA) are enriched in low complexity. Residues 74 to 256 (AQVLLREEVS…LATLTKDVPK (183 aa)) are a coiled coil. The tract at residues 174-333 (RDFIRNYEQH…SAAEGDRSST (160 aa)) is interaction with PPL. Positions 290–427 (QQTLYHSHPP…QSLSLSEGEE (138 aa)) are disordered. Phosphoserine is present on residues Ser352, Ser367, and Ser387. The span at 411 to 422 (SQCSPTRQSLSL) shows a compositional bias: polar residues. 3 SAM domains span residues 446-511 (WKAG…YRDA), 524-588 (DHHW…LYQV), and 612-679 (WTNQ…SAVF). Disordered regions lie at residues 688-715 (REAE…SSGL) and 729-762 (RGFS…LEQC). Positions 732 to 742 (SSKDPDFHDDY) are enriched in basic and acidic residues.

Belongs to the kazrin family. Isoform 2, isoform 3 and isoform 4 interact with PPL N-terminus. Isoform 2, isoform 3 and isoform 4 are expressed in several cell lines including keratinocytes and bladder and epidermoid carcinoma (at protein level). Isoform 2, isoform 3 and isoform 4 are expressed in hair follicle and interfollicular epidermis (at protein level).

The protein resides in the cytoplasm. It is found in the cytoskeleton. It localises to the cell junction. The protein localises to the desmosome. Its subcellular location is the nucleus. Component of the cornified envelope of keratinocytes. May be involved in the interplay between adherens junctions and desmosomes. The function in the nucleus is not known. This Homo sapiens (Human) protein is Kazrin.